The chain runs to 365 residues: Protein mab-21-like (365 aa).

Belongs to the mab-21 family.

This Aedes aegypti (Yellowfever mosquito) protein is Protein mab-21-like.